Reading from the N-terminus, the 352-residue chain is Molybdenum import ATP-binding protein ModC (352 aa).

One can recognise an ABC transporter domain in the interval 1–229; it reads MLELNFSQTL…SVMNPWLPKE (229 aa). 31-38 contributes to the ATP binding site; that stretch reads GVSGAGKT. One can recognise a Mop domain in the interval 289–352; sequence QTSIRNVLRA…AQIKSVSITA (64 aa).

It belongs to the ABC transporter superfamily. Molybdate importer (TC 3.A.1.8) family. The complex is composed of two ATP-binding proteins (ModC), two transmembrane proteins (ModB) and a solute-binding protein (ModA).

It is found in the cell inner membrane. The enzyme catalyses molybdate(out) + ATP + H2O = molybdate(in) + ADP + phosphate + H(+). Functionally, part of the ABC transporter complex ModABC involved in molybdenum import. Responsible for energy coupling to the transport system. This is Molybdenum import ATP-binding protein ModC from Escherichia coli O6:K15:H31 (strain 536 / UPEC).